We begin with the raw amino-acid sequence, 68 residues long: Agnoprotein (68 aa).

The Cytoplasmic portion of the chain corresponds to 1–24; sequence MVLRQLSRQASVKVGKTWTGTKRR. 2 positions are modified to phosphoserine; by host: Ser-7 and Ser-11. Residue Thr-21 is modified to Phosphothreonine; by host. The chain crosses the membrane as a helical; Signal-anchor for type II membrane protein span at residues 25-41; that stretch reads AQRIFIFILELLLDFCR. The Extracellular portion of the chain corresponds to 42–68; the sequence is GEDSVDGKKKKDSLTDKTETVTEKKES. The interval 44-68 is disordered; sequence DSVDGKKKKDSLTDKTETVTEKKES.

The protein belongs to the polyomavirus agnoprotein family. In terms of assembly, homooligomer. Interacts with VP1. Interacts with large T antigen; this interaction may impact upon the activity of T-antigen on the control of viral gene transcription and replication. Interacts with small t antigen. Interacts with host CBX5; this interaction induces the dissociation of CBX5 from LBR, resulting in destabilization of the nuclear envelope. Post-translationally, phosphorylated by host PKC. Phosphorylation alters the stability and may also have an impact on the subcellular location.

Its subcellular location is the host cytoplasm. It is found in the host nucleus membrane. It localises to the host rough endoplasmic reticulum membrane. The protein localises to the host cell membrane. Its function is as follows. Alters the structure of the nuclear envelope by interacting with host CBX5 and disrupting CBX5 association with LBR. Involved in the perinuclear-nuclear localization of the capsid protein VP1 during virion assembly and maturation. Plays an important role in the release of progeny virions from infected cells and in viral propagation, probably by acting as a viral ionic channel in the host plasma membrane. Allows influx of extracellular calcium ions in the host cell. May contribute to viral genome transcription and translation of viral late proteins. The chain is Agnoprotein from Simian virus 12 (strain wt100) (SV-12).